Here is a 365-residue protein sequence, read N- to C-terminus: MSGNTIGKLFTITTAGESHGEALIGIVDGCPPGLALTEVDLQDDLDLRKPGTSRHTSQRHEEDLVKILSGTFEGKTTGTPIALIIQNTDQRSKDYGNIKDTFRPGHADYTYHQKYGIRDYRGGGRSSARETAMRVACGGIAKKYLKQEYNIKIKGYLSQLGPIKIENSDWLEVHNNPFFCLDANKVKILEKYMDTLRKSGDSVGARINIIVNNMPVGLGEPIFDRLDADIAHSMMSINAVKGVEIGDGFRVVNQKGTEHRDAITLTGFKSNHAGGIFGGISSGQDILVSIALKPTSSLSLPIESIDKRGGPIEVITKGRHDPCVGIRATPIAEAMLAITIMDHVMRHRAQNLNIESITPIIPASI.

NADP(+)-binding residues include arginine 48 and arginine 54. FMN contacts are provided by residues 125-127 (RSS), 238-239 (NA), glycine 278, 293-297 (KPTSS), and arginine 319.

The protein belongs to the chorismate synthase family. As to quaternary structure, homotetramer. Requires FMNH2 as cofactor.

It catalyses the reaction 5-O-(1-carboxyvinyl)-3-phosphoshikimate = chorismate + phosphate. It participates in metabolic intermediate biosynthesis; chorismate biosynthesis; chorismate from D-erythrose 4-phosphate and phosphoenolpyruvate: step 7/7. In terms of biological role, catalyzes the anti-1,4-elimination of the C-3 phosphate and the C-6 proR hydrogen from 5-enolpyruvylshikimate-3-phosphate (EPSP) to yield chorismate, which is the branch point compound that serves as the starting substrate for the three terminal pathways of aromatic amino acid biosynthesis. This reaction introduces a second double bond into the aromatic ring system. This Vesicomyosocius okutanii subsp. Calyptogena okutanii (strain HA) protein is Chorismate synthase.